A 1194-amino-acid chain; its full sequence is ATP-dependent RNA helicase DHX30 (1194 aa).

Residues 1–10 (MFTLDSFRKD) are compositionally biased toward basic and acidic residues. The segment at 1–27 (MFTLDSFRKDRTQHRQRQCKLPPPRLP) is disordered. Serine 6 carries the phosphoserine modification. Residues 53–121 (PKNLLNSVIG…QAAAAACQLF (69 aa)) enclose the DRBM domain. The disordered stretch occupies residues 153 to 200 (WWRPEPTMPPTSWRQLNPENIRPAGTGGLSRSLGREEEEDEEEELEEG). Residues 188–200 (EEEEDEEEELEEG) show a composition bias toward acidic residues. A phosphoserine mark is found at serine 226 and serine 380. A Helicase ATP-binding domain is found at 444 to 612 (LSAIEQHPVV…FGGCPVIKVP (169 aa)). 457-464 (GDTGCGKT) lines the ATP pocket. The short motif at 559-562 (DEVH) is the DEAH box element. The Helicase C-terminal domain maps to 654–827 (LVTDLVLHID…NLVLQAKIHM (174 aa)).

Belongs to the DEAD box helicase family. DEAH subfamily. In terms of assembly, identified in a complex with TFAM and SSBP1. Interacts (via N-terminus) with ZC3HAV1 (via N-terminal domain) in an RNA-independent manner. Found in a complex with GRSF1, DDX28, FASTKD2 and FASTKD5.

Its subcellular location is the cytoplasm. The protein localises to the mitochondrion. The protein resides in the mitochondrion matrix. It is found in the mitochondrion nucleoid. The enzyme catalyses ATP + H2O = ADP + phosphate + H(+). In terms of biological role, RNA-dependent helicase. Plays an important role in the assembly of the mitochondrial large ribosomal subunit. Associates with mitochondrial DNA. Required for optimal function of the zinc-finger antiviral protein ZC3HAV1. Involved in nervous system development and differentiation through its involvement in the up-regulation of a number of genes which are required for neurogenesis, including GSC, NCAM1, neurogenin, and NEUROD. The sequence is that of ATP-dependent RNA helicase DHX30 (Dhx30) from Rattus norvegicus (Rat).